The chain runs to 874 residues: Alanine--tRNA ligase (874 aa).

Zn(2+)-binding residues include histidine 562, histidine 566, cysteine 663, and histidine 667.

This sequence belongs to the class-II aminoacyl-tRNA synthetase family. It depends on Zn(2+) as a cofactor.

The protein resides in the cytoplasm. It catalyses the reaction tRNA(Ala) + L-alanine + ATP = L-alanyl-tRNA(Ala) + AMP + diphosphate. In terms of biological role, catalyzes the attachment of alanine to tRNA(Ala) in a two-step reaction: alanine is first activated by ATP to form Ala-AMP and then transferred to the acceptor end of tRNA(Ala). Also edits incorrectly charged Ser-tRNA(Ala) and Gly-tRNA(Ala) via its editing domain. The chain is Alanine--tRNA ligase from Bordetella bronchiseptica (strain ATCC BAA-588 / NCTC 13252 / RB50) (Alcaligenes bronchisepticus).